Consider the following 438-residue polypeptide: MTPNWSELVAAADPALVLPSGERRAEVAVPGPLRLDALLDLGEGHAVGVVRSADAARWTVPLVRDGAGGVRRSRPGDGTAEHLVAALARRGATPDAAFVLEAFTGAAPVTGERGIIVDQTNESVIVGECAVVKWAVRLPAEGEPGSPAAQRIAALARGGFTEMPRPWGLLTLAEGAQPVLLASVVAYLPGALDGWDWAVDDVRRLARGELTMDQALLPAAQLGTLTARMHAALAARGRTPATAADVAAWGVRMREELDEAVASVPGAEGERLKAWAPRIADVYAELDALAGTPLIDVHGDFHVGQILRADGRYAVVDFDGNPVLPADQRAARQPAALDVVGMTASLDHVGRVVVFRTPDVDPAPVRAWIAAAQRSFLDAYRTTLARLDADDLFDDRLLTPLRYAQEVREYLYAVRHLPHWVYVPDLSLTDLLPERLKD.

ATP-binding positions include K133, 186 to 188, and D193; that span reads AYL. D300 is a binding site for D-glucosamine. Mg(2+)-binding residues include Q305, D317, and D319. The Substrate specificity determinant motif signature appears at 405–420; it reads QEVREYLYAVRHLPHW. E409 contributes to the D-glucosamine binding site.

The protein belongs to the actinobacterial glucosamine kinase family. Monomer. Requires Mg(2+) as cofactor.

The catalysed reaction is D-glucosamine + ATP = D-glucosamine 6-phosphate + ADP + H(+). Its function is as follows. Catalyzes the ATP-dependent phosphorylation of D-glucosamine (GlcN) to D-glucosamine 6-phosphate. May be involved in the phosphorylation of acquired extracellular GlcN derived from the hydrolysis of chitosan, i.e., in the incorporation of exogenous GlcN into the bacterial GlcNAc metabolism. To a lesser extent, is also active on glucose, but is unable to phosphorylate maltose, 18 other sugars and several aminoglycoside antibiotics. The chain is Glucosamine kinase from Streptacidiphilus jiangxiensis.